A 72-amino-acid polypeptide reads, in one-letter code: Large ribosomal subunit protein uL29 (72 aa).

It belongs to the universal ribosomal protein uL29 family.

The protein is Large ribosomal subunit protein uL29 of Prochlorococcus marinus (strain MIT 9515).